The chain runs to 361 residues: 3-dehydroquinate synthase (361 aa).

Residues 71-76 (DGEQYK), 105-109 (GVIGD), 129-130 (TT), K142, and K151 each bind NAD(+). 3 residues coordinate Zn(2+): E184, H247, and H264.

This sequence belongs to the sugar phosphate cyclases superfamily. Dehydroquinate synthase family. The cofactor is Co(2+). Requires Zn(2+) as cofactor. It depends on NAD(+) as a cofactor.

The protein localises to the cytoplasm. The enzyme catalyses 7-phospho-2-dehydro-3-deoxy-D-arabino-heptonate = 3-dehydroquinate + phosphate. It functions in the pathway metabolic intermediate biosynthesis; chorismate biosynthesis; chorismate from D-erythrose 4-phosphate and phosphoenolpyruvate: step 2/7. Functionally, catalyzes the conversion of 3-deoxy-D-arabino-heptulosonate 7-phosphate (DAHP) to dehydroquinate (DHQ). The protein is 3-dehydroquinate synthase of Pectobacterium atrosepticum (strain SCRI 1043 / ATCC BAA-672) (Erwinia carotovora subsp. atroseptica).